Here is a 282-residue protein sequence, read N- to C-terminus: Aquaporin PIP2-7 (282 aa).

The segment at 1 to 21 is disordered; sequence MSKEVSVEGEQPPVKDYTDPP. Residues 1–38 are Cytoplasmic-facing; that stretch reads MSKEVSVEGEQPPVKDYTDPPPEPLLNFGELRLWSFYR. A helical membrane pass occupies residues 39 to 59; sequence ALIAEFVATLLFLYVTIATVI. Residues 60–71 lie on the Extracellular side of the membrane; the sequence is GHKEQNAADQCS. A helical transmembrane segment spans residues 72–92; sequence GVGLLGIAWAFGGMIFILVYC. The Cytoplasmic segment spans residues 93–120; that stretch reads TAGISGGHINPAVTLGLFLARKVSLIRA. An NPA 1 motif is present at residues 102 to 104; sequence NPA. The helical transmembrane segment at 121-141 threads the bilayer; that stretch reads LLYMVAQCLGAIVGVGIVKGI. Residues 142–162 are Extracellular-facing; the sequence is MKHQYNSLGGGANVVAAGYSK. Residues 163 to 183 form a helical membrane-spanning segment; it reads GTALGAEIIGTFVLVYTVFSA. Residues 184 to 196 lie on the Cytoplasmic side of the membrane; the sequence is TDPKRSARDSHVP. A helical transmembrane segment spans residues 197 to 217; that stretch reads VLAPLPIGFAVFMVHLATIPI. At 218–244 the chain is on the extracellular side; it reads TGTGINPARSLGAAVIYNQDKPWDDHW. Residues 223 to 225 carry the NPA 2 motif; it reads NPA. The chain crosses the membrane as a helical span at residues 245 to 265; sequence ILWVGPFVGALAAAAYHQYIL. At 266–282 the chain is on the cytoplasmic side; that stretch reads RAAAIKALGSFRSNPSN.

Belongs to the MIP/aquaporin (TC 1.A.8) family. PIP (TC 1.A.8.11) subfamily. As to expression, expressed in roots, leaves and fruits.

The protein localises to the cell membrane. In terms of biological role, water channel required to facilitate the transport of water across cell membrane; mercury-insensitive. Contributes to the tolerance to multiple abiotic stresses including salt (NaCl), cold and water deprivation, by modulating cytosolic K(+)/Na(+) ratio, maintaining osmotic balance, and reducing membrane injury (e.g. oxidative injury). Also regulates the expression of abscisic acid (ABA)- biosynthetic and -responsive genes during dehydration and salt stresses. This chain is Aquaporin PIP2-7, found in Musa acuminata (Banana).